The following is a 474-amino-acid chain: UDP-N-acetylmuramate--L-alanine ligase (474 aa).

108–114 (GTHGKTT) contributes to the ATP binding site.

The protein belongs to the MurCDEF family.

It is found in the cytoplasm. The catalysed reaction is UDP-N-acetyl-alpha-D-muramate + L-alanine + ATP = UDP-N-acetyl-alpha-D-muramoyl-L-alanine + ADP + phosphate + H(+). It functions in the pathway cell wall biogenesis; peptidoglycan biosynthesis. In terms of biological role, cell wall formation. This is UDP-N-acetylmuramate--L-alanine ligase from Chloroflexus aggregans (strain MD-66 / DSM 9485).